The chain runs to 498 residues: Glycerol kinase (498 aa).

Residue T14 participates in ADP binding. Residues T14, T15, and S16 each coordinate ATP. Residue T14 coordinates sn-glycerol 3-phosphate. Residue R18 coordinates ADP. Positions 84, 85, and 136 each coordinate sn-glycerol 3-phosphate. Positions 84, 85, and 136 each coordinate glycerol. Residue H232 is modified to Phosphohistidine; by HPr. D246 is a binding site for sn-glycerol 3-phosphate. Glycerol contacts are provided by D246 and Q247. ADP-binding residues include T268 and G311. Residues T268, G311, Q315, and G412 each contribute to the ATP site. Residues G412 and N416 each coordinate ADP.

The protein belongs to the FGGY kinase family. Homotetramer and homodimer (in equilibrium). The phosphoenolpyruvate-dependent sugar phosphotransferase system (PTS), including enzyme I, and histidine-containing protein (HPr) are required for the phosphorylation, which leads to the activation of the enzyme.

The enzyme catalyses glycerol + ATP = sn-glycerol 3-phosphate + ADP + H(+). Its pathway is polyol metabolism; glycerol degradation via glycerol kinase pathway; sn-glycerol 3-phosphate from glycerol: step 1/1. With respect to regulation, activated by phosphorylation and inhibited by fructose 1,6-bisphosphate (FBP). Functionally, key enzyme in the regulation of glycerol uptake and metabolism. Catalyzes the phosphorylation of glycerol to yield sn-glycerol 3-phosphate. This is Glycerol kinase from Lactococcus lactis subsp. lactis (strain IL1403) (Streptococcus lactis).